Consider the following 69-residue polypeptide: Mu-conotoxin-like Am3.3 (69 aa).

The N-terminal stretch at 1–20 (MMSKLGVLLTICLLLFPLTA) is a signal peptide. Residues 21–52 (VPLDGDQPADRPAERMQDDISSENHPMFDAIR) constitute a propeptide that is removed on maturation. A Cysteine amide modification is found at Cys-68.

The protein belongs to the conotoxin M family. In terms of processing, is not hydroxylated. Contains 3 disulfide bonds. Expressed by the venom duct.

The protein localises to the secreted. In terms of biological role, mu-conotoxins block voltage-gated sodium channels (Nav). The protein is Mu-conotoxin-like Am3.3 of Conus amadis (Amadis cone).